The following is a 455-amino-acid chain: ATP-dependent protease ATPase subunit HslU (455 aa).

ATP is bound by residues Val23, 65-70 (GVGKTE), Asp266, Glu333, and Arg405.

The protein belongs to the ClpX chaperone family. HslU subfamily. A double ring-shaped homohexamer of HslV is capped on each side by a ring-shaped HslU homohexamer. The assembly of the HslU/HslV complex is dependent on binding of ATP.

The protein resides in the cytoplasm. ATPase subunit of a proteasome-like degradation complex; this subunit has chaperone activity. The binding of ATP and its subsequent hydrolysis by HslU are essential for unfolding of protein substrates subsequently hydrolyzed by HslV. HslU recognizes the N-terminal part of its protein substrates and unfolds these before they are guided to HslV for hydrolysis. The sequence is that of ATP-dependent protease ATPase subunit HslU from Xanthomonas campestris pv. campestris (strain 8004).